The sequence spans 193 residues: Protein D5 (193 aa).

In terms of biological role, repression of replication initiation (possible). The chain is Protein D5 (ddpE) from Dictyostelium discoideum (Social amoeba).